Here is a 611-residue protein sequence, read N- to C-terminus: Pleckstrin homology domain-containing family N member 1 (611 aa).

The tract at residues 1-45 (MGNSHCVPQAPRRLRASFSRKPSLKGNREDSARMSAGLPGPEAAR) is disordered. G2 carries the N-myristoyl glycine lipid modification. Positions 61-100 (TDILDLENQRENLEQPFLSVFKKGRRRVPVRNLGKVVHYA) are interaction with C1QBP. PH domains follow at residues 96–192 (VVHY…TALL) and 222–319 (AVCA…THRE). Y302 is modified (phosphotyrosine). Disordered regions lie at residues 323–424 (PLPG…PVTP), 438–468 (ESSP…TSHR), and 483–611 (MQSA…VQWI). A compositionally biased stretch (low complexity) spans 341–350 (GSLSSGGQTS). Positions 360-391 (STRTSHSLPESSVPSTVGCSSQHTPDQANSDR) are enriched in polar residues. Position 456 is a phosphotyrosine (Y456). Low complexity predominate over residues 498 to 509 (VPVSVPASDPRS). At S559 the chain carries Phosphoserine. The span at 570–585 (RSPRRSRDPGYDHLWD) shows a compositional bias: basic and acidic residues.

As to quaternary structure, found in a complex with cytochrome c mRNA and various ribosomal proteins. Interacts with C1QBP. Interacts with ELAVL1. Interacts with BID. Post-translationally, phosphorylation is essential for its mitochondrial localization and regulates its interaction with C1QBP. As to expression, ubiquitous. Epressed in several cancer cell lines of differing origin.

It localises to the cell membrane. The protein resides in the mitochondrion. It is found in the mitochondrion membrane. Controls the stability of the leptin mRNA harboring an AU-rich element (ARE) in its 3' UTR, in cooperation with the RNA stabilizer ELAVL1. Decreases the stability of the leptin mRNA by antagonizing the function of ELAVL1 by inducing its atypical recruitment from the nucleus to the cytosol. Binds to cardiolipin (CL), phosphatidic acid (PA), phosphatidylinositol 4-phosphate (PtdIns(4)P) and phosphatidylserine (PS). Promotes apoptosis by enhancing BAX-BAK hetero-oligomerization via interaction with BID in colon cancer cells. The polypeptide is Pleckstrin homology domain-containing family N member 1 (PLEKHN1) (Homo sapiens (Human)).